Here is a 493-residue protein sequence, read N- to C-terminus: Cobyric acid synthase (493 aa).

One can recognise a GATase cobBQ-type domain in the interval 261 to 455; it reads HTRIAVVAYP…LHGLFEDAAV (195 aa). The Nucleophile role is filled by cysteine 342. Residue histidine 447 is part of the active site.

This sequence belongs to the CobB/CobQ family. CobQ subfamily.

Its pathway is cofactor biosynthesis; adenosylcobalamin biosynthesis. Functionally, catalyzes amidations at positions B, D, E, and G on adenosylcobyrinic A,C-diamide. NH(2) groups are provided by glutamine, and one molecule of ATP is hydrogenolyzed for each amidation. This Acidovorax sp. (strain JS42) protein is Cobyric acid synthase.